Here is a 942-residue protein sequence, read N- to C-terminus: Serine/threonine-protein kinase ATG1 (942 aa).

Positions 11 to 312 constitute a Protein kinase domain; sequence YVVEKEIGKG…FEEFFNNKIV (302 aa). Residues 17 to 25 and K41 contribute to the ATP site; that span reads IGKGSFATV. D159 (proton acceptor) is an active-site residue. Residues 435-452 show a composition bias toward polar residues; that stretch reads NSSRVNKLDKSNLSGKSD. 3 disordered regions span residues 435 to 454, 505 to 529, and 817 to 836; these read NSSR…SDSS, QPHN…SRRA, and NSKP…NDSN. Positions 515–529 are enriched in low complexity; it reads RAPSTTSGGTSSRRA. Residues 819-834 are compositionally biased toward polar residues; that stretch reads KPGTHNQSPKSKISND.

This sequence belongs to the protein kinase superfamily. Ser/Thr protein kinase family. APG1/unc-51/ULK1 subfamily. In terms of assembly, homodimer. Forms a ternary complex with ATG13 and ATG17.

It localises to the cytoplasm. Its subcellular location is the preautophagosomal structure membrane. It carries out the reaction L-seryl-[protein] + ATP = O-phospho-L-seryl-[protein] + ADP + H(+). It catalyses the reaction L-threonyl-[protein] + ATP = O-phospho-L-threonyl-[protein] + ADP + H(+). Serine/threonine protein kinase involved in the cytoplasm to vacuole transport (Cvt) and found to be essential in autophagy, where it is required for the formation of autophagosomes. Involved in the clearance of protein aggregates which cannot be efficiently cleared by the proteasome. Required for selective autophagic degradation of the nucleus (nucleophagy) as well as for mitophagy which contributes to regulate mitochondrial quantity and quality by eliminating the mitochondria to a basal level to fulfill cellular energy requirements and preventing excess ROS production. Also involved in endoplasmic reticulum-specific autophagic process, in selective removal of ER-associated degradation (ERAD) substrates. Plays a key role in ATG9 and ATG23 cycling through the pre-autophagosomal structure and is necessary to promote ATG18 binding to ATG9 through phosphorylation of ATG9. Catalyzes phosphorylation of ATG4, decreasing the interaction between ATG4 and ATG8 and impairing deconjugation of PE-conjugated forms of ATG8. Contributes to virulence by conferring resistance to unstable nutrient environments and immune defense of hosts. This Candida glabrata (strain ATCC 2001 / BCRC 20586 / JCM 3761 / NBRC 0622 / NRRL Y-65 / CBS 138) (Yeast) protein is Serine/threonine-protein kinase ATG1.